Consider the following 101-residue polypeptide: Protein Tat (101 aa).

Basic and acidic residues predominate over residues Met-1–Pro-10. Positions Met-1–Thr-20 are disordered. Positions Met-1 to Asn-24 are interaction with human CREBBP. Residues Met-1–Gly-48 form a transactivation region. Cys-22, Cys-25, and Cys-27 together coordinate Zn(2+). The segment at Cys-22–Cys-37 is cysteine-rich. Lys-28 is modified (N6-acetyllysine; by host PCAF). Residues Cys-30, His-33, Cys-34, and Cys-37 each contribute to the Zn(2+) site. Positions Phe-38 to Gly-48 are core. Residues Gly-48 to Thr-58 show a composition bias toward basic residues. Positions Gly-48–Asp-101 are disordered. Residues Arg-49–Arg-57 carry the Nuclear localization signal, RNA-binding (TAR), and protein transduction motif. The interaction with the host capping enzyme RNGTT stretch occupies residues Arg-49–Lys-86. An N6-acetyllysine; by host EP300 and GCN5L2 mark is found at Lys-50 and Lys-51. The residue at position 52 (Arg-52) is an Asymmetric dimethylarginine; by host PRMT6. A compositionally biased stretch (basic and acidic residues) spans Lys-86 to Asp-101.

The protein belongs to the lentiviruses Tat family. Interacts with host CCNT1. Associates with the P-TEFb complex composed at least of Tat, P-TEFb (CDK9 and CCNT1), TAR RNA, RNA Pol II. Recruits the HATs CREBBP, TAF1/TFIID, EP300, PCAF and GCN5L2. Interacts with host KAT5/Tip60; this interaction targets the latter to degradation. Interacts with the host deacetylase SIRT1. Interacts with host capping enzyme RNGTT; this interaction stimulates RNGTT. Binds to host KDR, and to the host integrins ITGAV/ITGB3 and ITGA5/ITGB1. Interacts with host KPNB1/importin beta-1 without previous binding to KPNA1/importin alpha-1. Interacts with EIF2AK2. Interacts with host nucleosome assembly protein NAP1L1; this interaction may be required for the transport of Tat within the nucleus, since the two proteins interact at the nuclear rim. Interacts with host C1QBP/SF2P32; this interaction involves lysine-acetylated Tat. Interacts with the host chemokine receptors CCR2, CCR3 and CXCR4. Interacts with host DPP4/CD26; this interaction may trigger an anti-proliferative effect. Interacts with host LDLR. Interacts with the host extracellular matrix metalloproteinase MMP1. Interacts with host PRMT6; this interaction mediates Tat's methylation. Interacts with, and is ubiquitinated by MDM2/Hdm2. Interacts with host PSMC3 and HTATIP2. Interacts with STAB1; this interaction may overcome SATB1-mediated repression of IL2 and IL2RA (interleukin) in T cells by binding to the same domain than HDAC1. Interacts (when acetylated) with human CDK13, thereby increasing HIV-1 mRNA splicing and promoting the production of the doubly spliced HIV-1 protein Nef. Interacts with host TBP; this interaction modulates the activity of transcriptional pre-initiation complex. Interacts with host RELA. Interacts with host PLSCR1; this interaction negatively regulates Tat transactivation activity by altering its subcellular distribution. Asymmetrical arginine methylation by host PRMT6 seems to diminish the transactivation capacity of Tat and affects the interaction with host CCNT1. In terms of processing, acetylation by EP300, CREBBP, GCN5L2/GCN5 and PCAF regulates the transactivation activity of Tat. EP300-mediated acetylation of Lys-50 promotes dissociation of Tat from the TAR RNA through the competitive binding to PCAF's bromodomain. In addition, the non-acetylated Tat's N-terminus can also interact with PCAF. PCAF-mediated acetylation of Lys-28 enhances Tat's binding to CCNT1. Lys-50 is deacetylated by SIRT1. Post-translationally, polyubiquitination by host MDM2 does not target Tat to degradation, but activates its transactivation function and fosters interaction with CCNT1 and TAR RNA. Phosphorylated by EIF2AK2 on serine and threonine residues adjacent to the basic region important for TAR RNA binding and function. Phosphorylation of Tat by EIF2AK2 is dependent on the prior activation of EIF2AK2 by dsRNA.

Its subcellular location is the host nucleus. It localises to the host nucleolus. The protein localises to the host cytoplasm. The protein resides in the secreted. Its function is as follows. Transcriptional activator that increases RNA Pol II processivity, thereby increasing the level of full-length viral transcripts. Recognizes a hairpin structure at the 5'-LTR of the nascent viral mRNAs referred to as the transactivation responsive RNA element (TAR) and recruits the cyclin T1-CDK9 complex (P-TEFb complex) that will in turn hyperphosphorylate the RNA polymerase II to allow efficient elongation. The CDK9 component of P-TEFb and other Tat-activated kinases hyperphosphorylate the C-terminus of RNA Pol II that becomes stabilized and much more processive. Other factors such as HTATSF1/Tat-SF1, SUPT5H/SPT5, and HTATIP2 are also important for Tat's function. Besides its effect on RNA Pol II processivity, Tat induces chromatin remodeling of proviral genes by recruiting the histone acetyltransferases (HATs) CREBBP, EP300 and PCAF to the chromatin. This also contributes to the increase in proviral transcription rate, especially when the provirus integrates in transcriptionally silent region of the host genome. To ensure maximal activation of the LTR, Tat mediates nuclear translocation of NF-kappa-B by interacting with host RELA. Through its interaction with host TBP, Tat may also modulate transcription initiation. Tat can reactivate a latently infected cell by penetrating in it and transactivating its LTR promoter. In the cytoplasm, Tat is thought to act as a translational activator of HIV-1 mRNAs. Functionally, extracellular circulating Tat can be endocytosed by surrounding uninfected cells via the binding to several surface receptors such as CD26, CXCR4, heparan sulfate proteoglycans (HSPG) or LDLR. Neurons are rarely infected, but they internalize Tat via their LDLR. Through its interaction with nuclear HATs, Tat is potentially able to control the acetylation-dependent cellular gene expression. Modulates the expression of many cellular genes involved in cell survival, proliferation or in coding for cytokines or cytokine receptors. Tat plays a role in T-cell and neurons apoptosis. Tat induced neurotoxicity and apoptosis probably contribute to neuroAIDS. Circulating Tat also acts as a chemokine-like and/or growth factor-like molecule that binds to specific receptors on the surface of the cells, affecting many cellular pathways. In the vascular system, Tat binds to ITGAV/ITGB3 and ITGA5/ITGB1 integrins dimers at the surface of endothelial cells and competes with bFGF for heparin-binding sites, leading to an excess of soluble bFGF. This is Protein Tat from Homo sapiens (Human).